Consider the following 233-residue polypeptide: 2,3-bisphosphoglycerate-dependent phosphoglycerate mutase (233 aa).

Substrate-binding positions include 8-15 (RHGQSLWN), 21-22 (TG), Arg60, 116-119 (ERYY), Lys127, 143-144 (RR), and 187-188 (GN). The active-site Tele-phosphohistidine intermediate is the His9. Glu116 (proton donor/acceptor) is an active-site residue.

The protein belongs to the phosphoglycerate mutase family. BPG-dependent PGAM subfamily.

It catalyses the reaction (2R)-2-phosphoglycerate = (2R)-3-phosphoglycerate. It functions in the pathway carbohydrate degradation; glycolysis; pyruvate from D-glyceraldehyde 3-phosphate: step 3/5. Its function is as follows. Catalyzes the interconversion of 2-phosphoglycerate and 3-phosphoglycerate. The sequence is that of 2,3-bisphosphoglycerate-dependent phosphoglycerate mutase from Gloeothece citriformis (strain PCC 7424) (Cyanothece sp. (strain PCC 7424)).